The sequence spans 472 residues: Aspartyl/glutamyl-tRNA(Asn/Gln) amidotransferase subunit B (472 aa).

Belongs to the GatB/GatE family. GatB subfamily. Heterotrimer of A, B and C subunits.

The catalysed reaction is L-glutamyl-tRNA(Gln) + L-glutamine + ATP + H2O = L-glutaminyl-tRNA(Gln) + L-glutamate + ADP + phosphate + H(+). It carries out the reaction L-aspartyl-tRNA(Asn) + L-glutamine + ATP + H2O = L-asparaginyl-tRNA(Asn) + L-glutamate + ADP + phosphate + 2 H(+). In terms of biological role, allows the formation of correctly charged Asn-tRNA(Asn) or Gln-tRNA(Gln) through the transamidation of misacylated Asp-tRNA(Asn) or Glu-tRNA(Gln) in organisms which lack either or both of asparaginyl-tRNA or glutaminyl-tRNA synthetases. The reaction takes place in the presence of glutamine and ATP through an activated phospho-Asp-tRNA(Asn) or phospho-Glu-tRNA(Gln). This chain is Aspartyl/glutamyl-tRNA(Asn/Gln) amidotransferase subunit B, found in Campylobacter jejuni (strain RM1221).